A 62-amino-acid chain; its full sequence is Large ribosomal subunit protein bL28 (62 aa).

This sequence belongs to the bacterial ribosomal protein bL28 family.

In Acidothermus cellulolyticus (strain ATCC 43068 / DSM 8971 / 11B), this protein is Large ribosomal subunit protein bL28.